The sequence spans 474 residues: 6-phospho-beta-galactosidase (474 aa).

Residues Q19, H116, N159, E160, and N297 each coordinate D-galactose 6-phosphate. E160 (proton donor) is an active-site residue. Residue E375 is the Nucleophile of the active site. Positions 433, 434, 440, and 442 each coordinate D-galactose 6-phosphate.

This sequence belongs to the glycosyl hydrolase 1 family.

The enzyme catalyses a 6-phospho-beta-D-galactoside + H2O = D-galactose 6-phosphate + an alcohol. It functions in the pathway carbohydrate metabolism; lactose degradation; D-galactose 6-phosphate and beta-D-glucose from lactose 6-phosphate: step 1/1. The chain is 6-phospho-beta-galactosidase from Lacticaseibacillus casei (strain BL23) (Lactobacillus casei).